A 305-amino-acid polypeptide reads, in one-letter code: Ribosomal protein L11 methyltransferase (305 aa).

S-adenosyl-L-methionine-binding residues include Thr-149, Gly-176, Asp-198, and Asn-240.

It belongs to the methyltransferase superfamily. PrmA family.

Its subcellular location is the cytoplasm. The catalysed reaction is L-lysyl-[protein] + 3 S-adenosyl-L-methionine = N(6),N(6),N(6)-trimethyl-L-lysyl-[protein] + 3 S-adenosyl-L-homocysteine + 3 H(+). In terms of biological role, methylates ribosomal protein L11. This Trichlorobacter lovleyi (strain ATCC BAA-1151 / DSM 17278 / SZ) (Geobacter lovleyi) protein is Ribosomal protein L11 methyltransferase.